The primary structure comprises 299 residues: Regucalcin (299 aa).

Glutamate 18 contributes to the a divalent metal cation binding site. Arginine 101, asparagine 103, and glutamate 121 together coordinate substrate. Lysine 144 bears the N6-succinyllysine mark. A divalent metal cation is bound by residues asparagine 154 and aspartate 204. Aspartate 204 acts as the Proton donor/acceptor in catalysis. Lysine 244 and lysine 253 each carry N6-succinyllysine.

It belongs to the SMP-30/CGR1 family. In terms of assembly, monomer. It depends on Zn(2+) as a cofactor. Requires Mn(2+) as cofactor. Ca(2+) serves as cofactor. Mg(2+) is required as a cofactor.

The protein resides in the cytoplasm. The catalysed reaction is D-glucono-1,5-lactone + H2O = D-gluconate + H(+). It functions in the pathway cofactor biosynthesis; L-ascorbate biosynthesis via UDP-alpha-D-glucuronate pathway; L-ascorbate from UDP-alpha-D-glucuronate: step 3/4. Functionally, gluconolactonase with low activity towards other sugar lactones, including gulonolactone and galactonolactone. Catalyzes a key step in ascorbic acid (vitamin C) biosynthesis. Can also hydrolyze diisopropyl phosphorofluoridate and phenylacetate (in vitro). Calcium-binding protein. Modulates Ca(2+) signaling, and Ca(2+)-dependent cellular processes and enzyme activities. The sequence is that of Regucalcin (RGN) from Oryctolagus cuniculus (Rabbit).